The following is a 91-amino-acid chain: LKNIMPELEVRSRRIGGQKYQIPSEVRPERKQSLGLRWLVQFAQKRNEKTMQQKLAKEIIDAASGNGLAVKKREEIHRMAEANKSFAHYRW.

It belongs to the universal ribosomal protein uS7 family. As to quaternary structure, part of the 30S ribosomal subunit. Contacts proteins S9 and S11.

Its function is as follows. One of the primary rRNA binding proteins, it binds directly to 16S rRNA where it nucleates assembly of the head domain of the 30S subunit. Is located at the subunit interface close to the decoding center, probably blocks exit of the E-site tRNA. In Apple proliferation phytoplasma, this protein is Small ribosomal subunit protein uS7 (rpsG).